The sequence spans 274 residues: MSASGEVSTARDYIGHHLNNLQLDLRTFELVDPNSGGSATFWTLNIDSLFFSVVLGILFLYVFRKVAVNATSGVPGKLQTAIELIMGFVDNSVRDMYHGKSKVIAPLALTVFVWVLLMNVMDLLPIDFLPYIGEHFFGLPALRVVPTADVSVTLSMAIGVFVLILYYSIKMKGIGGFTKELTLQPFNHPLFIPINLILEGVSLLSKPVSLGLRLFGNMYAGELIFILIAGLLPWWSQWLLSLPWAIFHILIITLQAFIFMVLTIVYLSMASEEH.

5 helical membrane-spanning segments follow: residues 43–63 (TLNIDSLFFSVVLGILFLYVF), 103–123 (VIAPLALTVFVWVLLMNVMDL), 144–164 (VVPTADVSVTLSMAIGVFVLI), 223–243 (LIFILIAGLLPWWSQWLLSLP), and 245–265 (AIFHILIITLQAFIFMVLTIV).

The protein belongs to the ATPase A chain family. F-type ATPases have 2 components, CF(1) - the catalytic core - and CF(0) - the membrane proton channel. CF(1) has five subunits: alpha(3), beta(3), gamma(1), delta(1), epsilon(1). CF(0) has three main subunits: a(1), b(2) and c(9-12). The alpha and beta chains form an alternating ring which encloses part of the gamma chain. CF(1) is attached to CF(0) by a central stalk formed by the gamma and epsilon chains, while a peripheral stalk is formed by the delta and b chains.

It localises to the cell inner membrane. Key component of the proton channel; it plays a direct role in the translocation of protons across the membrane. This chain is ATP synthase subunit a, found in Photorhabdus laumondii subsp. laumondii (strain DSM 15139 / CIP 105565 / TT01) (Photorhabdus luminescens subsp. laumondii).